A 941-amino-acid chain; its full sequence is Isoleucine--tRNA ligase (941 aa).

Positions 59-69 (PYANGNIHIGH) match the 'HIGH' region motif. Position 562 (Glu-562) interacts with L-isoleucyl-5'-AMP. The 'KMSKS' region motif lies at 603–607 (KMSKS). Lys-606 serves as a coordination point for ATP. 4 residues coordinate Zn(2+): Cys-904, Cys-907, Cys-924, and Cys-927.

This sequence belongs to the class-I aminoacyl-tRNA synthetase family. IleS type 1 subfamily. Monomer. It depends on Zn(2+) as a cofactor.

The protein localises to the cytoplasm. The enzyme catalyses tRNA(Ile) + L-isoleucine + ATP = L-isoleucyl-tRNA(Ile) + AMP + diphosphate. Its function is as follows. Catalyzes the attachment of isoleucine to tRNA(Ile). As IleRS can inadvertently accommodate and process structurally similar amino acids such as valine, to avoid such errors it has two additional distinct tRNA(Ile)-dependent editing activities. One activity is designated as 'pretransfer' editing and involves the hydrolysis of activated Val-AMP. The other activity is designated 'posttransfer' editing and involves deacylation of mischarged Val-tRNA(Ile). The chain is Isoleucine--tRNA ligase from Haemophilus influenzae (strain 86-028NP).